A 386-amino-acid chain; its full sequence is uncharacterized protein (386 aa).

The interval 355-386 is disordered; sequence PSEAQKVQVKSNKKPPIAPKPEHLKKRDHGLC. Residues 377–386 are compositionally biased toward basic residues; the sequence is HLKKRDHGLC.

This is an uncharacterized protein from Rickettsia prowazekii (strain Madrid E).